Reading from the N-terminus, the 608-residue chain is Glutamine--fructose-6-phosphate aminotransferase [isomerizing] (608 aa).

Residue C2 is the Nucleophile; for GATase activity of the active site. One can recognise a Glutamine amidotransferase type-2 domain in the interval C2–T217. SIS domains lie at I281–T422 and L456–P598. K603 acts as the For Fru-6P isomerization activity in catalysis.

The protein localises to the cytoplasm. The catalysed reaction is D-fructose 6-phosphate + L-glutamine = D-glucosamine 6-phosphate + L-glutamate. In terms of biological role, involved in the production of the root hair deformation (HAD) factor specifically on medicago. In Rhizobium meliloti (strain 1021) (Ensifer meliloti), this protein is Glutamine--fructose-6-phosphate aminotransferase [isomerizing] (nodM).